Reading from the N-terminus, the 253-residue chain is Retinoic acid early-inducible protein 1-beta (253 aa).

An N-terminal signal peptide occupies residues methionine 1 to glycine 28. Cysteine 37 and cysteine 56 form a disulfide bridge. 5 N-linked (GlcNAc...) asparagine glycosylation sites follow: asparagine 38, asparagine 70, asparagine 83, asparagine 143, and asparagine 156. A disulfide bridge connects residues cysteine 90 and cysteine 190. A disordered region spans residues leucine 198 to threonine 230. A compositionally biased stretch (low complexity) spans serine 211–serine 221. Serine 229 carries GPI-anchor amidated serine lipidation. Positions threonine 230–methionine 253 are cleaved as a propeptide — removed in mature form.

Belongs to the NKG2D ligand family. Post-translationally, glycosylated. In terms of tissue distribution, expressed predominantly in embryonic brain.

The protein resides in the cell membrane. Functionally, acts as a ligand for KLRK1. This Mus musculus (Mouse) protein is Retinoic acid early-inducible protein 1-beta (Raet1b).